The sequence spans 326 residues: Probable protein phosphatase 2C 61 (326 aa).

The PPM-type phosphatase domain occupies 42 to 316 (LGSVSSLAGG…DDISVVCLSL (275 aa)). The Mn(2+) site is built by aspartate 77, glycine 78, aspartate 261, and aspartate 307.

The protein belongs to the PP2C family. Mg(2+) serves as cofactor. The cofactor is Mn(2+).

The catalysed reaction is O-phospho-L-seryl-[protein] + H2O = L-seryl-[protein] + phosphate. It carries out the reaction O-phospho-L-threonyl-[protein] + H2O = L-threonyl-[protein] + phosphate. The polypeptide is Probable protein phosphatase 2C 61 (Arabidopsis thaliana (Mouse-ear cress)).